The primary structure comprises 178 residues: ATP synthase subunit delta (178 aa).

This sequence belongs to the ATPase delta chain family. F-type ATPases have 2 components, F(1) - the catalytic core - and F(0) - the membrane proton channel. F(1) has five subunits: alpha(3), beta(3), gamma(1), delta(1), epsilon(1). F(0) has three main subunits: a(1), b(2) and c(10-14). The alpha and beta chains form an alternating ring which encloses part of the gamma chain. F(1) is attached to F(0) by a central stalk formed by the gamma and epsilon chains, while a peripheral stalk is formed by the delta and b chains.

The protein resides in the cell inner membrane. Its function is as follows. F(1)F(0) ATP synthase produces ATP from ADP in the presence of a proton or sodium gradient. F-type ATPases consist of two structural domains, F(1) containing the extramembraneous catalytic core and F(0) containing the membrane proton channel, linked together by a central stalk and a peripheral stalk. During catalysis, ATP synthesis in the catalytic domain of F(1) is coupled via a rotary mechanism of the central stalk subunits to proton translocation. Functionally, this protein is part of the stalk that links CF(0) to CF(1). It either transmits conformational changes from CF(0) to CF(1) or is implicated in proton conduction. This Pseudomonas fluorescens (strain ATCC BAA-477 / NRRL B-23932 / Pf-5) protein is ATP synthase subunit delta.